The chain runs to 356 residues: Photosystem II protein D1 4 (356 aa).

A run of 3 helical transmembrane segments spans residues 32 to 49 (YIGW…AATT), 121 to 136 (HFLI…FWEL), and 145 to 159 (WIAV…AATS). His121 is a chlorophyll a binding site. Asp173 and Asp192 together coordinate [CaMn4O5] cluster. The helical transmembrane segment at 200–221 (FHMLGVAGVFGGALLSSLHGSL) threads the bilayer. His201 is a chlorophyll a binding site. His218 lines the a quinone pocket. Fe cation contacts are provided by His218 and His276. Residues 278–292 (LLAALPTIGIWFAAM) form a helical membrane-spanning segment. His336 is a [CaMn4O5] cluster binding site.

The protein belongs to the reaction center PufL/M/PsbA/D family. In terms of assembly, PSII is composed of 1 copy each of membrane proteins PsbA, PsbB, PsbC, PsbD, PsbE, PsbF, PsbH, PsbI, PsbJ, PsbK, PsbL, PsbM, PsbT, PsbX, PsbY, PsbZ, Psb30/Ycf12, peripheral proteins PsbO, CyanoQ (PsbQ), PsbU, PsbV and a large number of cofactors. It forms dimeric complexes. The D1/D2 heterodimer binds P680, chlorophylls that are the primary electron donor of PSII, and subsequent electron acceptors. It shares a non-heme iron and each subunit binds pheophytin, quinone, additional chlorophylls, carotenoids and lipids. D1 provides most of the ligands for the Mn4-Ca-O5 cluster of the oxygen-evolving complex (OEC). There is also a Cl(-1) ion associated with D1 and D2, which is required for oxygen evolution. The PSII complex binds additional chlorophylls, carotenoids and specific lipids. serves as cofactor. Post-translationally, tyr-164 forms a radical intermediate that is referred to as redox-active TyrZ, YZ or Y-Z.

Its subcellular location is the cellular thylakoid membrane. The enzyme catalyses 2 a plastoquinone + 4 hnu + 2 H2O = 2 a plastoquinol + O2. Photosystem II (PSII) is a light-driven water:plastoquinone oxidoreductase that uses light energy to abstract electrons from H(2)O, generating O(2) and a proton gradient subsequently used for ATP formation. It consists of a core antenna complex that captures photons, and an electron transfer chain that converts photonic excitation into a charge separation. The D1/D2 (PsbA/PsbD) reaction center heterodimer binds P680, the primary electron donor of PSII as well as several subsequent electron acceptors. In Trichormus variabilis (strain ATCC 29413 / PCC 7937) (Anabaena variabilis), this protein is Photosystem II protein D1 4.